We begin with the raw amino-acid sequence, 179 residues long: Zinc finger HIT domain-containing protein 3 (179 aa).

Positions 11, 14, 22, 25, 30, 34, 38, and 49 each coordinate Zn(2+). The segment at 11-49 (CVVCLEKPKYRCPACRVPYCSLPCFRKHKAPPLQQLPVC) adopts an HIT-type zinc-finger fold. S104 is modified (phosphoserine).

As to quaternary structure, thyroid receptor interacting proteins (TRIPs) specifically interact with the ligand binding domain of the thyroid receptor (TR). Requires the presence of thyroid hormone for its interaction. Interacts with NUFIP1. Interacts (via HIT-type zinc finger) with the RUVBL1/RUVBL2 complex in the presence of ADP.

The protein localises to the cytoplasm. It localises to the nucleus. The chain is Zinc finger HIT domain-containing protein 3 (ZNHIT3) from Bos taurus (Bovine).